The primary structure comprises 142 residues: Large ribosomal subunit protein uL16 (142 aa).

The protein belongs to the universal ribosomal protein uL16 family. As to quaternary structure, part of the 50S ribosomal subunit.

Functionally, binds 23S rRNA and is also seen to make contacts with the A and possibly P site tRNAs. The sequence is that of Large ribosomal subunit protein uL16 from Thermotoga maritima (strain ATCC 43589 / DSM 3109 / JCM 10099 / NBRC 100826 / MSB8).